The chain runs to 250 residues: uncharacterized protein (250 aa).

Residues 1–19 (MAKPRNAAESKAAKAQANA) form the signal peptide. A run of 2 helical transmembrane segments spans residues 51 to 71 (IGAF…AGGF) and 73 to 93 (MFTM…VIFG). The interval 226–250 (AGVMPKGPLPTTAKMRSVQRTVRRK) is disordered.

It localises to the cell membrane. This is an uncharacterized protein from Mycobacterium tuberculosis (strain CDC 1551 / Oshkosh).